The following is a 608-amino-acid chain: Microtubule-associated protein VP7 (608 aa).

It is found in the virion. The protein localises to the host cytoplasm. Its subcellular location is the host cytoskeleton. In terms of biological role, minor inner capsid component. Displays NTPase and RNA 5'-triphosphatase (RTPase) activities. May function as a cofactor of polymerase. Associates with microtubules and plays a role in the formation, structural organization and morphology of viral inclusions, where the assembly of cores and the replication of viral RNA occur. This Oryza latifolia (Indian wild rice) protein is Microtubule-associated protein VP7.